The following is a 285-amino-acid chain: Iodotyrosine deiodinase 1 (285 aa).

The helical transmembrane segment at 1–21 threads the bilayer; the sequence is MFLLTPVLVAVVCILVVWVFK. FMN-binding positions include 96 to 100 and 124 to 125; these read RRSVR and SG. 3,5-diiodo-L-tyrosine contacts are provided by Ala-126, Glu-153, Tyr-157, and Lys-178. 3-iodo-L-tyrosine contacts are provided by Ala-126, Glu-153, Tyr-157, and Lys-178. Residues 233–235 and Arg-275 contribute to the FMN site; that span reads TTT.

This sequence belongs to the nitroreductase family. As to quaternary structure, homodimer. FMN serves as cofactor.

It localises to the cell membrane. The protein resides in the cytoplasmic vesicle membrane. The enzyme catalyses 2 iodide + L-tyrosine + 2 NADP(+) = 3,5-diiodo-L-tyrosine + 2 NADPH + H(+). It catalyses the reaction iodide + L-tyrosine + NADP(+) = 3-iodo-L-tyrosine + NADPH. It carries out the reaction 3-iodo-L-tyrosine + iodide + NADP(+) = 3,5-diiodo-L-tyrosine + NADPH + H(+). The catalysed reaction is L-tyrosine + chloride + NADP(+) = 3-chloro-L-tyrosine + NADPH. The enzyme catalyses bromide + L-tyrosine + NADP(+) = 3-bromo-L-tyrosine + NADPH. Functionally, catalyzes the dehalogenation of halotyrosines such as 3-bromo-L-tyrosine, 3-chloro-L-tyrosine, 3-iodo-L-tyrosine and 3,5-diiodo-L-tyrosine. During thyroid hormone biosynthesis, facilitates iodide salvage by catalysing the oxidative NADPH-dependent deiodination of the halogenated by-products of thyroid hormone production, monoiodotyrosine (L-MIT) and diiodotyrosine (L-DIT). The scavanged iodide can then reenter the hormone-producing pathways. Acts more efficiently on 3-iodo-L-tyrosine than 3,5-diiodo-L-tyrosine. The sequence is that of Iodotyrosine deiodinase 1 (Iyd) from Mus musculus (Mouse).